Here is a 502-residue protein sequence, read N- to C-terminus: ATP synthase subunit alpha (502 aa).

An ATP-binding site is contributed by 169–176 (GDRQTGKT).

Belongs to the ATPase alpha/beta chains family. F-type ATPases have 2 components, CF(1) - the catalytic core - and CF(0) - the membrane proton channel. CF(1) has five subunits: alpha(3), beta(3), gamma(1), delta(1), epsilon(1). CF(0) has three main subunits: a(1), b(2) and c(9-12). The alpha and beta chains form an alternating ring which encloses part of the gamma chain. CF(1) is attached to CF(0) by a central stalk formed by the gamma and epsilon chains, while a peripheral stalk is formed by the delta and b chains.

It localises to the cell membrane. It carries out the reaction ATP + H2O + 4 H(+)(in) = ADP + phosphate + 5 H(+)(out). Its function is as follows. Produces ATP from ADP in the presence of a proton gradient across the membrane. The alpha chain is a regulatory subunit. This chain is ATP synthase subunit alpha, found in Staphylococcus aureus (strain Mu3 / ATCC 700698).